Consider the following 401-residue polypeptide: Imidazolonepropionase (401 aa).

His-66 and His-68 together coordinate Fe(3+). Residues His-66 and His-68 each contribute to the Zn(2+) site. 4-imidazolone-5-propanoate-binding residues include Arg-75, Tyr-138, and His-171. Tyr-138 is a binding site for N-formimidoyl-L-glutamate. Residue His-236 participates in Fe(3+) binding. His-236 is a binding site for Zn(2+). Gln-239 lines the 4-imidazolone-5-propanoate pocket. Asp-311 provides a ligand contact to Fe(3+). Asp-311 lines the Zn(2+) pocket. 2 residues coordinate N-formimidoyl-L-glutamate: Asn-313 and Gly-315. Thr-316 contributes to the 4-imidazolone-5-propanoate binding site.

The protein belongs to the metallo-dependent hydrolases superfamily. HutI family. The cofactor is Zn(2+). Fe(3+) is required as a cofactor.

It localises to the cytoplasm. The catalysed reaction is 4-imidazolone-5-propanoate + H2O = N-formimidoyl-L-glutamate. Its pathway is amino-acid degradation; L-histidine degradation into L-glutamate; N-formimidoyl-L-glutamate from L-histidine: step 3/3. In terms of biological role, catalyzes the hydrolytic cleavage of the carbon-nitrogen bond in imidazolone-5-propanoate to yield N-formimidoyl-L-glutamate. It is the third step in the universal histidine degradation pathway. The chain is Imidazolonepropionase from Pseudomonas fluorescens (strain Pf0-1).